Here is a 268-residue protein sequence, read N- to C-terminus: 4-hydroxy-tetrahydrodipicolinate reductase (268 aa).

Residues 8 to 13 (GGGGKM) and Glu34 each bind NAD(+). NADP(+) is bound at residue Lys35. NAD(+) is bound by residues 98-100 (GST) and 122-125 (APNM). His155 (proton donor/acceptor) is an active-site residue. His156 lines the (S)-2,3,4,5-tetrahydrodipicolinate pocket. The Proton donor role is filled by Lys159. 165–166 (GT) is a (S)-2,3,4,5-tetrahydrodipicolinate binding site.

The protein belongs to the DapB family.

It localises to the cytoplasm. The enzyme catalyses (S)-2,3,4,5-tetrahydrodipicolinate + NAD(+) + H2O = (2S,4S)-4-hydroxy-2,3,4,5-tetrahydrodipicolinate + NADH + H(+). The catalysed reaction is (S)-2,3,4,5-tetrahydrodipicolinate + NADP(+) + H2O = (2S,4S)-4-hydroxy-2,3,4,5-tetrahydrodipicolinate + NADPH + H(+). The protein operates within amino-acid biosynthesis; L-lysine biosynthesis via DAP pathway; (S)-tetrahydrodipicolinate from L-aspartate: step 4/4. Functionally, catalyzes the conversion of 4-hydroxy-tetrahydrodipicolinate (HTPA) to tetrahydrodipicolinate. This Syntrophus aciditrophicus (strain SB) protein is 4-hydroxy-tetrahydrodipicolinate reductase.